Here is a 472-residue protein sequence, read N- to C-terminus: tRNA modification GTPase MnmE (472 aa).

(6S)-5-formyl-5,6,7,8-tetrahydrofolate is bound by residues Arg-28, Glu-91, and Lys-130. A TrmE-type G domain is found at 225–391 (GAKVVLAGKT…LSEKAYSVLA (167 aa)). A K(+)-binding site is contributed by Asn-235. GTP is bound by residues 235–240 (NAGKSS), 254–260 (SDIHGTT), and 279–282 (DTAG). Ser-239 is a binding site for Mg(2+). Ser-254, Ile-256, and Thr-259 together coordinate K(+). Thr-260 contacts Mg(2+). Lys-472 serves as a coordination point for (6S)-5-formyl-5,6,7,8-tetrahydrofolate.

It belongs to the TRAFAC class TrmE-Era-EngA-EngB-Septin-like GTPase superfamily. TrmE GTPase family. As to quaternary structure, homodimer. Heterotetramer of two MnmE and two MnmG subunits. K(+) serves as cofactor.

Its subcellular location is the cytoplasm. Functionally, exhibits a very high intrinsic GTPase hydrolysis rate. Involved in the addition of a carboxymethylaminomethyl (cmnm) group at the wobble position (U34) of certain tRNAs, forming tRNA-cmnm(5)s(2)U34. The chain is tRNA modification GTPase MnmE from Treponema denticola (strain ATCC 35405 / DSM 14222 / CIP 103919 / JCM 8153 / KCTC 15104).